We begin with the raw amino-acid sequence, 312 residues long: Urease accessory protein UreD (312 aa).

Basic and acidic residues predominate over residues 1–15; the sequence is MLAEQFTDKNKHAEQ. The segment at 1–24 is disordered; sequence MLAEQFTDKNKHAEQELSPGSSAV.

The protein belongs to the UreD family. As to quaternary structure, ureD, UreF and UreG form a complex that acts as a GTP-hydrolysis-dependent molecular chaperone, activating the urease apoprotein by helping to assemble the nickel containing metallocenter of UreC. The UreE protein probably delivers the nickel.

The protein localises to the cytoplasm. Its function is as follows. Required for maturation of urease via the functional incorporation of the urease nickel metallocenter. The polypeptide is Urease accessory protein UreD (Hahella chejuensis (strain KCTC 2396)).